The chain runs to 313 residues: WUSCHEL-related homeobox 5 (313 aa).

Residues 1–32 (METTTTTLGGGGGGRAGGFSDPPSPLSPPLSP) form a disordered region. Gly residues predominate over residues 8 to 17 (LGGGGGGRAG). Residues 22-31 (PPSPLSPPLS) are compositionally biased toward pro residues. The homeobox; WUS-type DNA-binding region spans 40 to 104 (LANARWTPTK…NHKARQRQKQ (65 aa)). 2 disordered regions span residues 224–247 (AAGR…GRET) and 271–313 (CAAV…SGGR). Low complexity predominate over residues 271–301 (CAAVSPTTPSASASFSWESESSDSPSSEAPP).

It belongs to the WUS homeobox family.

The protein resides in the nucleus. Transcription factor which may be involved in developmental processes. The sequence is that of WUSCHEL-related homeobox 5 (WOX5) from Oryza sativa subsp. japonica (Rice).